Reading from the N-terminus, the 520-residue chain is Nuclear GTP-binding protein NUG1 (520 aa).

Basic residues-rich tracts occupy residues Met1–Thr13 and Lys21–Ala34. A disordered region spans residues Met1–Asn53. Over residues Lys35–Pro48 the composition is skewed to basic and acidic residues. The CP-type G domain occupies Tyr165–Pro343. GTP-binding positions include Asn213 to Asp216, Gly287 to Ser294, and Asp336 to Gly339. Ser337 carries the post-translational modification Phosphoserine.

It belongs to the TRAFAC class YlqF/YawG GTPase family.

It is found in the nucleus. Its function is as follows. GTPase required for 60S ribosomal subunit export to the cytoplasm. The polypeptide is Nuclear GTP-binding protein NUG1 (NUG1) (Saccharomyces cerevisiae (strain ATCC 204508 / S288c) (Baker's yeast)).